The primary structure comprises 367 residues: 1-deoxy-D-xylulose 5-phosphate reductoisomerase (367 aa).

Residues Thr10, Gly11, Ser12, Ile13, Gly34, Lys35, Asn36, and Asn112 each contribute to the NADPH site. Lys113 contributes to the 1-deoxy-D-xylulose 5-phosphate binding site. Glu114 contacts NADPH. Mn(2+) is bound at residue Asp138. Residues Ser139, Glu140, Ser164, and His186 each coordinate 1-deoxy-D-xylulose 5-phosphate. Glu140 is a binding site for Mn(2+). Gly192 contacts NADPH. Residues Ser199, Asn204, Lys205, and Glu208 each contribute to the 1-deoxy-D-xylulose 5-phosphate site. A Mn(2+)-binding site is contributed by Glu208.

The protein belongs to the DXR family. Requires Mg(2+) as cofactor. Mn(2+) serves as cofactor.

The catalysed reaction is 2-C-methyl-D-erythritol 4-phosphate + NADP(+) = 1-deoxy-D-xylulose 5-phosphate + NADPH + H(+). The protein operates within isoprenoid biosynthesis; isopentenyl diphosphate biosynthesis via DXP pathway; isopentenyl diphosphate from 1-deoxy-D-xylulose 5-phosphate: step 1/6. Functionally, catalyzes the NADPH-dependent rearrangement and reduction of 1-deoxy-D-xylulose-5-phosphate (DXP) to 2-C-methyl-D-erythritol 4-phosphate (MEP). In Thermus thermophilus (strain ATCC BAA-163 / DSM 7039 / HB27), this protein is 1-deoxy-D-xylulose 5-phosphate reductoisomerase.